A 366-amino-acid chain; its full sequence is UDP-N-acetylglucosamine--N-acetylmuramyl-(pentapeptide) pyrophosphoryl-undecaprenol N-acetylglucosamine transferase (366 aa).

UDP-N-acetyl-alpha-D-glucosamine-binding positions include 14-16 (TGG), Asn-125, Arg-168, Ser-196, and Gln-297.

The protein belongs to the glycosyltransferase 28 family. MurG subfamily.

It localises to the cell inner membrane. The enzyme catalyses di-trans,octa-cis-undecaprenyl diphospho-N-acetyl-alpha-D-muramoyl-L-alanyl-D-glutamyl-meso-2,6-diaminopimeloyl-D-alanyl-D-alanine + UDP-N-acetyl-alpha-D-glucosamine = di-trans,octa-cis-undecaprenyl diphospho-[N-acetyl-alpha-D-glucosaminyl-(1-&gt;4)]-N-acetyl-alpha-D-muramoyl-L-alanyl-D-glutamyl-meso-2,6-diaminopimeloyl-D-alanyl-D-alanine + UDP + H(+). It functions in the pathway cell wall biogenesis; peptidoglycan biosynthesis. Its function is as follows. Cell wall formation. Catalyzes the transfer of a GlcNAc subunit on undecaprenyl-pyrophosphoryl-MurNAc-pentapeptide (lipid intermediate I) to form undecaprenyl-pyrophosphoryl-MurNAc-(pentapeptide)GlcNAc (lipid intermediate II). This Rhodopseudomonas palustris (strain HaA2) protein is UDP-N-acetylglucosamine--N-acetylmuramyl-(pentapeptide) pyrophosphoryl-undecaprenol N-acetylglucosamine transferase.